We begin with the raw amino-acid sequence, 395 residues long: Acetate kinase (395 aa).

Asparagine 8 is a Mg(2+) binding site. Residue lysine 15 participates in ATP binding. Arginine 89 is a binding site for substrate. Catalysis depends on aspartate 146, which acts as the Proton donor/acceptor. Residues 206–210 (HLGNG), 281–283 (DLR), and 329–333 (GIGEN) contribute to the ATP site. Glutamate 382 serves as a coordination point for Mg(2+).

The protein belongs to the acetokinase family. As to quaternary structure, homodimer. Mg(2+) is required as a cofactor. The cofactor is Mn(2+).

Its subcellular location is the cytoplasm. The catalysed reaction is acetate + ATP = acetyl phosphate + ADP. It functions in the pathway metabolic intermediate biosynthesis; acetyl-CoA biosynthesis; acetyl-CoA from acetate: step 1/2. Catalyzes the formation of acetyl phosphate from acetate and ATP. Can also catalyze the reverse reaction. The protein is Acetate kinase of Shouchella clausii (strain KSM-K16) (Alkalihalobacillus clausii).